A 364-amino-acid chain; its full sequence is Heat-inducible transcription repressor HrcA (364 aa).

Belongs to the HrcA family.

Its function is as follows. Negative regulator of class I heat shock genes (grpE-dnaK-dnaJ and groELS operons). Prevents heat-shock induction of these operons. This Cyanothece sp. (strain PCC 7425 / ATCC 29141) protein is Heat-inducible transcription repressor HrcA.